Consider the following 344-residue polypeptide: L-rhamnose-proton symporter (344 aa).

The next 10 helical transmembrane spans lie at 4–24 (PILL…CFYA), 38–58 (WSLG…WWLL), 68–88 (FDMA…IGNI), 101–121 (MGIG…TPVL), 137–157 (TLLG…AGLL), 175–195 (LILA…MDAA), 207–227 (INAL…GAVV), 255–275 (LIAN…QFFF), 290–310 (ISWM…GLLF), and 324–344 (LVLG…GMAA).

This sequence belongs to the L-rhamnose transporter (TC 2.A.7.6) family.

Its subcellular location is the cell inner membrane. The catalysed reaction is L-rhamnopyranose(in) + H(+)(in) = L-rhamnopyranose(out) + H(+)(out). In terms of biological role, uptake of L-rhamnose across the cytoplasmic membrane with the concomitant transport of protons into the cell (symport system). In Pectobacterium carotovorum subsp. carotovorum (strain PC1), this protein is L-rhamnose-proton symporter.